We begin with the raw amino-acid sequence, 119 residues long: Beta-2-microglobulin (119 aa).

The N-terminal stretch at 1–20 (MSRSVALAVLALLSLSGLEA) is a signal peptide. The 90-residue stretch at 25 to 114 (PKIQVYSRHP…VTLSGPRTVK (90 aa)) folds into the Ig-like C1-type domain. A disulfide bond links C45 and C100.

Belongs to the beta-2-microglobulin family. Heterodimer of an alpha chain and a beta chain. Beta-2-microglobulin is the beta-chain of major histocompatibility complex class I molecules.

It localises to the secreted. Functionally, component of the class I major histocompatibility complex (MHC). Involved in the presentation of peptide antigens to the immune system. This chain is Beta-2-microglobulin (B2M), found in Papio anubis (Olive baboon).